A 96-amino-acid chain; its full sequence is ATP synthase subunit c (96 aa).

Transmembrane regions (helical) follow at residues 28–50 and 75–95; these read LGAGVAMGIGAIGPGVGEGNIGA and AVTESTGLYSLVVALILLFVL.

The protein belongs to the ATPase C chain family. In terms of assembly, F-type ATPases have 2 components, F(1) - the catalytic core - and F(0) - the membrane proton channel. F(1) has five subunits: alpha(3), beta(3), gamma(1), delta(1), epsilon(1). F(0) has three main subunits: a(1), b(2) and c(10-14). The alpha and beta chains form an alternating ring which encloses part of the gamma chain. F(1) is attached to F(0) by a central stalk formed by the gamma and epsilon chains, while a peripheral stalk is formed by the delta and b chains.

The protein localises to the cell inner membrane. Its function is as follows. F(1)F(0) ATP synthase produces ATP from ADP in the presence of a proton or sodium gradient. F-type ATPases consist of two structural domains, F(1) containing the extramembraneous catalytic core and F(0) containing the membrane proton channel, linked together by a central stalk and a peripheral stalk. During catalysis, ATP synthesis in the catalytic domain of F(1) is coupled via a rotary mechanism of the central stalk subunits to proton translocation. Functionally, key component of the F(0) channel; it plays a direct role in translocation across the membrane. A homomeric c-ring of between 10-14 subunits forms the central stalk rotor element with the F(1) delta and epsilon subunits. This chain is ATP synthase subunit c, found in Petrotoga mobilis (strain DSM 10674 / SJ95).